The following is a 203-amino-acid chain: Small ribosomal subunit protein uS4 (203 aa).

Residues 92–152 (LRLATVLLRA…EKSRKLVPFI (61 aa)) form the S4 RNA-binding domain.

Belongs to the universal ribosomal protein uS4 family. Part of the 30S ribosomal subunit. Contacts protein S5. The interaction surface between S4 and S5 is involved in control of translational fidelity.

In terms of biological role, one of the primary rRNA binding proteins, it binds directly to 16S rRNA where it nucleates assembly of the body of the 30S subunit. Functionally, with S5 and S12 plays an important role in translational accuracy. This chain is Small ribosomal subunit protein uS4, found in Thermobifida fusca (strain YX).